The following is an 89-amino-acid chain: Small ribosomal subunit protein bS16 (89 aa).

Belongs to the bacterial ribosomal protein bS16 family.

The chain is Small ribosomal subunit protein bS16 from Chloroflexus aurantiacus (strain ATCC 29364 / DSM 637 / Y-400-fl).